The primary structure comprises 353 residues: Inactive ubiquitin thioesterase OTULINL (353 aa).

Residues 1–80 (MEAPRSAPRE…KWWIGYLQRK (80 aa)) form a required for membrane binding region. The OTU domain occupies 125–353 (KCVRAVKRDN…NGHHYHIPVF (229 aa)).

The protein belongs to the peptidase C65 family. Otulin subfamily. As to quaternary structure, does not bind ubiquitin or ubiquitin-like proteins.

The protein localises to the cytoplasm. The protein resides in the endoplasmic reticulum membrane. It localises to the nucleus envelope. Lacks deubiquitinase activity. This is Inactive ubiquitin thioesterase OTULINL from Mus musculus (Mouse).